A 399-amino-acid polypeptide reads, in one-letter code: Keratin, type I cytoskeletal 19 (399 aa).

The tract at residues 1–78 (MTSYSYRQSS…ATSDGLLAGN (78 aa)) is head. R7 carries the omega-N-methylarginine modification. 2 positions are modified to phosphoserine: S14 and S22. The residue at position 24 (R24) is an Asymmetric dimethylarginine; alternate. Residue R24 is modified to Omega-N-methylarginine; alternate. R32 carries the omega-N-methylarginine modification. S35 and S40 each carry phosphoserine. Omega-N-methylarginine occurs at positions 43 and 51. S57 and S71 each carry phosphoserine. Residues 79–114 (EKLTMQNLNDRLASYLEKVRALEEANGDLEVKIRDW) are coil 1A. Residues 79–390 (EKLTMQNLND…NLLEGQDAYF (312 aa)) enclose the IF rod domain. A linker 1 region spans residues 115–132 (YQKQGPGPARDYSHYFKT). The coil 1B stretch occupies residues 133-224 (IEDLRDQILG…KNHEEEMSVL (92 aa)). The interval 225 to 247 (KGQVGGQVSVEVDSAPGIDLAKI) is linker 12. The tract at residues 243–389 (DLAKILSDMR…RNLLEGQDAY (147 aa)) is necessary for interaction with PNN. The tract at residues 248–386 (LSDMRSQYEV…ATYRNLLEGQ (139 aa)) is coil 2. At T322 the chain carries Phosphothreonine. The interval 387–399 (DAYFNDLSLAKAL) is rod-like helical tail. S394 bears the Phosphoserine mark.

The protein belongs to the intermediate filament family. In terms of assembly, heterotetramer of two type I and two type II keratins. Interacts with PNN and the actin-binding domain of DMD.

Its function is as follows. Involved in the organization of myofibers. Together with KRT8, helps to link the contractile apparatus to dystrophin at the costameres of striated muscle. This Bos taurus (Bovine) protein is Keratin, type I cytoskeletal 19 (KRT19).